The chain runs to 301 residues: uncharacterized protein (301 aa).

Positions 1–26 are cleaved as a signal peptide; the sequence is MKGFSCSRPGYLTGLLLLAVAPILTA. Cysteine 27 carries N-palmitoyl cysteine lipidation. The S-diacylglycerol cysteine moiety is linked to residue cysteine 27. In terms of domain architecture, TNase-like spans 46-243; the sequence is KLKPATIEYW…YNAKINIWSH (198 aa). Residues 64–136 are disordered; it reads NYASEERRKE…SKGDSTGDEK (73 aa). 2 stretches are compositionally biased toward basic and acidic residues: residues 67-95 and 120-136; these read SEER…KTED and TPEK…GDEK.

It localises to the cell membrane. This is an uncharacterized protein from Mycoplasma pneumoniae (strain ATCC 29342 / M129 / Subtype 1) (Mycoplasmoides pneumoniae).